An 896-amino-acid chain; its full sequence is Alanine--tRNA ligase (896 aa).

The Zn(2+) site is built by His599, His603, Cys707, and His711.

The protein belongs to the class-II aminoacyl-tRNA synthetase family. Requires Zn(2+) as cofactor.

Its subcellular location is the cytoplasm. The enzyme catalyses tRNA(Ala) + L-alanine + ATP = L-alanyl-tRNA(Ala) + AMP + diphosphate. Functionally, catalyzes the attachment of alanine to tRNA(Ala) in a two-step reaction: alanine is first activated by ATP to form Ala-AMP and then transferred to the acceptor end of tRNA(Ala). Also edits incorrectly charged Ser-tRNA(Ala) and Gly-tRNA(Ala) via its editing domain. The chain is Alanine--tRNA ligase from Pyrobaculum calidifontis (strain DSM 21063 / JCM 11548 / VA1).